The primary structure comprises 167 residues: Lipoprotein signal peptidase (167 aa).

Helical transmembrane passes span T8 to L28, W46 to F66, Q68 to L88, and I101 to G121. Catalysis depends on residues D125 and D143. A helical membrane pass occupies residues F139–F159.

This sequence belongs to the peptidase A8 family.

Its subcellular location is the cell inner membrane. The catalysed reaction is Release of signal peptides from bacterial membrane prolipoproteins. Hydrolyzes -Xaa-Yaa-Zaa-|-(S,diacylglyceryl)Cys-, in which Xaa is hydrophobic (preferably Leu), and Yaa (Ala or Ser) and Zaa (Gly or Ala) have small, neutral side chains.. It functions in the pathway protein modification; lipoprotein biosynthesis (signal peptide cleavage). This protein specifically catalyzes the removal of signal peptides from prolipoproteins. The sequence is that of Lipoprotein signal peptidase from Chlamydia trachomatis serovar L2 (strain ATCC VR-902B / DSM 19102 / 434/Bu).